The chain runs to 496 residues: Thiamine transporter 2 (496 aa).

The Cytoplasmic segment spans residues 1–7 (MDCYRTS). The helical transmembrane segment at 8–28 (LSSSWIYPTVILCLFGFFSMM) threads the bilayer. The Extracellular portion of the chain corresponds to 29–53 (RPSEPFLIPYLSGPDKNLTSAEITN). A glycan (N-linked (GlcNAc...) asparagine) is linked at Asn45. The helical transmembrane segment at 54–74 (EIFPVWTYSYLVLLLPVFVLT) threads the bilayer. At 75 to 81 (DYVRYKP) the chain is on the cytoplasmic side. A helical membrane pass occupies residues 82-102 (VIILQGISFIITWLLLLFGQG). Topologically, residues 103 to 110 (VKTMQVVE) are extracellular. The chain crosses the membrane as a helical span at residues 111–131 (FFYGMVTAAEVAYYAYIYSVV). The Cytoplasmic segment spans residues 132–144 (SPEHYQRVSGYCR). Residues 145–165 (SVTLAAYTAGSVLAQLLVSLA) traverse the membrane as a helical segment. An N-linked (GlcNAc...) asparagine glycan is attached at Asn166. Residues 166 to 169 (NMSY) are Extracellular-facing. The chain crosses the membrane as a helical span at residues 170–190 (FYLNVISLASVSVAFLFSLFL). Over 191-282 (PMPKKSMFFH…YSSKRLFYWS (92 aa)) the chain is Cytoplasmic. The helical transmembrane segment at 283-303 (LWWAFATAGFNQVLNYVQILW) threads the bilayer. Over 304-316 (DYKAPSQDSSIYN) the chain is Extracellular. Residues 317 to 337 (GAVEAIATFGGAVAAFAVGYV) traverse the membrane as a helical segment. The Cytoplasmic portion of the chain corresponds to 338 to 342 (KVNWD). Residues 343–363 (LLGELALVVFSVVNAGSLFLM) form a helical membrane-spanning segment. Residues 364–375 (HYTANIWACYAG) lie on the Extracellular side of the membrane. A helical membrane pass occupies residues 376 to 396 (YLIFKSSYMLLITIAVFQIAV). Residues 397-405 (NLNVERYAL) are Cytoplasmic-facing. The helical transmembrane segment at 406-426 (VFGINTFIALVIQTIMTVIVV) threads the bilayer. Over 427–434 (DQRGLNLP) the chain is Extracellular. A helical membrane pass occupies residues 435–455 (VSIQFLVYGSYFAVIAGIFLM). Residues 456–496 (RSMYITYSTKSQKDVQSPAPSENPDVSHPEEESNIIMSTKL) lie on the Cytoplasmic side of the membrane. The disordered stretch occupies residues 468–496 (KDVQSPAPSENPDVSHPEEESNIIMSTKL).

The protein belongs to the reduced folate carrier (RFC) transporter (TC 2.A.48) family. Widely expressed but most abundant in placenta, kidney and liver.

Its subcellular location is the membrane. It carries out the reaction thiamine(out) + H(+)(in) = thiamine(in) + H(+)(out). The catalysed reaction is pyridoxine(out) + n H(+)(out) = pyridoxine(in) + n H(+)(in). Pyridoxine transport is inhibited by carbonyl cyanide p-trifluoromethoxyphenylhydrazone (FCCP) and carbonyl cyanide m-chlorophenylhydrazone (CCCP). Functionally, mediates high affinity thiamine uptake, probably via a proton anti-port mechanism. Has no folate transport activity. Mediates H(+)-dependent pyridoxine transport. This chain is Thiamine transporter 2 (SLC19A3), found in Homo sapiens (Human).